Here is a 246-residue protein sequence, read N- to C-terminus: 14-3-3 protein beta/alpha (246 aa).

Position 1 is an N-acetylmethionine (methionine 1). Threonine 2 is modified (N-acetylthreonine; in 14-3-3 protein beta/alpha, N-terminally processed). Residue threonine 2 is modified to Phosphothreonine. Lysine 5 carries the post-translational modification N6-acetyllysine. Lysine 51 is modified (N6-acetyllysine; alternate). A Glycyl lysine isopeptide (Lys-Gly) (interchain with G-Cter in SUMO2); alternate cross-link involves residue lysine 51. The residue at position 60 (serine 60) is a Phosphoserine. The residue at position 70 (lysine 70) is an N6-acetyllysine. Tyrosine 84 and tyrosine 106 each carry 3'-nitrotyrosine. At lysine 117 the chain carries N6-acetyllysine. A phosphoserine mark is found at serine 186 and serine 232.

Belongs to the 14-3-3 family. As to quaternary structure, homodimer. Interacts with SAMSN1 and PRKCE. Interacts with AKAP13. Interacts with SSH1 and TORC2/CRTC2. Interacts with ABL1; the interaction results in cytoplasmic location of ABL1 and inhibition of cABL-mediated apoptosis. Interacts with ROR2 (dimer); the interaction results in phosphorylation of YWHAB on tyrosine residues. Interacts with GAB2. Interacts with YAP1 (phosphorylated form). Interacts with the phosphorylated (by AKT1) form of SRPK2. Interacts with PKA-phosphorylated AANAT. Interacts with MYO1C. Interacts with SIRT2. Interacts with the 'Thr-369' phosphorylated form of DAPK2. Interacts with PI4KB, TBC1D22A and TBC1D22B. Interacts with the 'Ser-1134' and 'Ser-1161' phosphorylated form of SOS1. Interacts (via phosphorylated form) with YWHAB; this interaction occurs in a protein kinase AKT1-dependent manner. Interacts with SLITRK1. Interacts with SYNPO2 (phosphorylated form); YWHAB competes with ACTN2 for interaction with SYNPO2. Interacts with RIPOR2 (via phosphorylated form); this interaction occurs in a chemokine-dependent manner and does not compete for binding of RIPOR2 with RHOA nor blocks inhibition of RIPOR2-mediated RHOA activity. Interacts with MARK2 and MARK3. Interacts with TESK1; the interaction is dependent on the phosphorylation of TESK1 'Ser-439' and inhibits TESK1 kinase activity. Interacts with MEFV. Interacts with HDAC4. Interacts with ADAM22 (via C-terminus). In terms of processing, the alpha, brain-specific form differs from the beta form in being phosphorylated. Phosphorylated on Ser-60 by protein kinase C delta type catalytic subunit in a sphingosine-dependent fashion. Post-translationally, isoform Short contains a N-acetylmethionine at position 1.

The protein localises to the cytoplasm. It localises to the melanosome. Adapter protein implicated in the regulation of a large spectrum of both general and specialized signaling pathways. Binds to a large number of partners, usually by recognition of a phosphoserine or phosphothreonine motif. Binding generally results in the modulation of the activity of the binding partner. Negative regulator of osteogenesis. Blocks the nuclear translocation of the phosphorylated form (by AKT1) of SRPK2 and antagonizes its stimulatory effect on cyclin D1 expression resulting in blockage of neuronal apoptosis elicited by SRPK2. Negative regulator of signaling cascades that mediate activation of MAP kinases via AKAP13. The chain is 14-3-3 protein beta/alpha (Ywhab) from Rattus norvegicus (Rat).